The primary structure comprises 95 residues: Large ribosomal subunit protein bL21 (95 aa).

It belongs to the bacterial ribosomal protein bL21 family. Part of the 50S ribosomal subunit. Contacts protein L20.

Functionally, this protein binds to 23S rRNA in the presence of protein L20. The chain is Large ribosomal subunit protein bL21 from Rubrobacter xylanophilus (strain DSM 9941 / JCM 11954 / NBRC 16129 / PRD-1).